Here is a 754-residue protein sequence, read N- to C-terminus: Probable TonB-dependent siderophore receptor PirA (754 aa).

The first 24 residues, 1 to 24, serve as a signal peptide directing secretion; that stretch reads MSKRIIQSVLSVSVLASMMSMAFA. In terms of domain architecture, TBDR plug spans 54–181; it reads EQVKQSLGVS…AGGVVNIITK (128 aa). One can recognise a TBDR beta-barrel domain in the interval 186-754; it reads ETHGSVEFYT…AYYASLKYSF (569 aa). Polar residues predominate over residues 404-414; sequence VSTTQGKDSSG. The disordered stretch occupies residues 404-424; the sequence is VSTTQGKDSSGSGYGDQLAKG. The cysteines at positions 511 and 519 are disulfide-linked. The TonB C-terminal box signature appears at 737-754; that stretch reads QTYNEPGRAYYASLKYSF.

This sequence belongs to the TonB-dependent receptor family.

The protein localises to the cell outer membrane. Functionally, probably involved in the initial step of iron uptake by binding iron chelating siderophores, thereby allowing extraction of iron from the environment. May bind the siderophore, ferric enterobactin, with micromolar affinity. This chain is Probable TonB-dependent siderophore receptor PirA, found in Acinetobacter baumannii (strain ATCC 19606 / DSM 30007 / JCM 6841 / CCUG 19606 / CIP 70.34 / NBRC 109757 / NCIMB 12457 / NCTC 12156 / 81).